The chain runs to 130 residues: Small ribosomal subunit protein uS8 (130 aa).

Belongs to the universal ribosomal protein uS8 family. As to quaternary structure, part of the 30S ribosomal subunit. Contacts proteins S5 and S12.

In terms of biological role, one of the primary rRNA binding proteins, it binds directly to 16S rRNA central domain where it helps coordinate assembly of the platform of the 30S subunit. The sequence is that of Small ribosomal subunit protein uS8 from Haemophilus ducreyi (strain 35000HP / ATCC 700724).